A 211-amino-acid chain; its full sequence is Formate dehydrogenase, cytochrome b556(fdo) subunit (211 aa).

The Cytoplasmic segment spans residues methionine 1–asparagine 17. Residue histidine 18 coordinates heme b. The chain crosses the membrane as a helical span at residues histidine 18 to glycine 32. Over leucine 33–alanine 53 the chain is Periplasmic. Residues arginine 54–phenylalanine 72 form a helical membrane-spanning segment. Histidine 57 provides a ligand contact to heme b. Residues phenylalanine 73 to lysine 112 are Cytoplasmic-facing. Residues cysteine 113–valine 130 traverse the membrane as a helical segment. The Periplasmic portion of the chain corresponds to isoleucine 131–methionine 151. Residues leucine 152–alanine 170 form a helical membrane-spanning segment. Heme b contacts are provided by histidine 153 and histidine 167. Residues alanine 171–glutamate 211 are Cytoplasmic-facing.

The protein belongs to the formate dehydrogenase gamma subunit family. Formate dehydrogenase is a membrane-bound complex, formed by subunits alpha, beta and gamma. Requires heme as cofactor.

The protein resides in the cell inner membrane. Allows to use formate as major electron donor during aerobic respiration. Subunit gamma is probably the cytochrome b556(FDO) component of the formate dehydrogenase. This is Formate dehydrogenase, cytochrome b556(fdo) subunit (fdoI) from Escherichia coli O157:H7.